Here is a 146-residue protein sequence, read N- to C-terminus: Leghemoglobin 1 (146 aa).

Residues 2-146 (GFTAQQDALV…LAAAIKKAMS (145 aa)) enclose the Globin domain. 2 positions are modified to phosphoserine; by CCAMK: Ser-13 and Ser-14. Tyr-30 is subject to Nitrated tyrosine. 2 positions are modified to phosphoserine; by CCAMK: Ser-45 and Ser-55. Ser-45 contacts heme b. His-61 is an O2 binding site. Heme b-binding residues include Lys-64, His-93, and Lys-96. Ser-123 carries the post-translational modification Phosphoserine; by CCAMK. Nitrated tyrosine is present on Tyr-134.

Belongs to the plant globin family. As to quaternary structure, monomer. Nitrated in effective nodules and particularly in hypoxic conditions; this mechanism may play a protective role in the symbiosis by buffering toxic peroxynitrite NO(2)(-). Nitration level decrease during nodule senescence. In terms of processing, phosphorylated by CCAMK at serine residues in a Ca(2+)-dependent manner; the phosphorylation at Ser-45 disrupts the molecular environment of its porphyrin ring oxygen binding pocket, thus leading to a reduced oxygen consumption and to the delivery of oxygen O(2) to symbiosomes. As to expression, specifically and strongly expressed in root nodules and at low levels in seedlings.

It is found in the cytoplasm. The protein resides in the cytosol. It localises to the nucleus. Its function is as follows. Leghemoglobin that reversibly binds oxygen O(2) through a pentacoordinated heme iron. In root nodules, facilitates the diffusion of oxygen to the bacteroids while preventing the bacterial nitrogenase from being inactivated by buffering dioxygen, nitric oxide and carbon monoxide, and promoting the formation of reactive oxygen species (ROS, e.g. H(2)O(2)). This role is essential for symbiotic nitrogen fixation (SNF). The protein is Leghemoglobin 1 of Lotus japonicus (Lotus corniculatus var. japonicus).